The chain runs to 277 residues: Glutamate racemase (277 aa).

Substrate-binding positions include 13 to 14 and 45 to 46; these read DS and YG. The active-site Proton donor/acceptor is Cys77. 78–79 contributes to the substrate binding site; the sequence is NT. Cys192 acts as the Proton donor/acceptor in catalysis. 193–194 lines the substrate pocket; that stretch reads TH.

The protein belongs to the aspartate/glutamate racemases family.

It carries out the reaction L-glutamate = D-glutamate. Its pathway is cell wall biogenesis; peptidoglycan biosynthesis. Its function is as follows. Provides the (R)-glutamate required for cell wall biosynthesis. The protein is Glutamate racemase of Rhizobium meliloti (strain 1021) (Ensifer meliloti).